The sequence spans 245 residues: MSDYKSLKVAELREKLAEKGLSTAGNKAELVSRLTAATESNDENTSNNNATDLGDLAPPEDDIDWGDMENDTISTDVNKPAEPESKETSAPAAAVEIEKENESIISKETSQAPETSTGAEEHQETTEESKQSVSNEVSSPDVAKEQEKLIQRAKRFGIPVDDEQIKKAARAARFGIQQPLASSNNKNHNQSKNPQNRSNSRSKQRNKNAPPKSAPSKRKSNILDDPIEAEKARKRAERFGVAAKN.

The SAP domain maps to 4-38 (YKSLKVAELREKLAEKGLSTAGNKAELVSRLTAAT). A disordered region spans residues 32–245 (SRLTAATESN…AERFGVAAKN (214 aa)). Residues 37–52 (ATESNDENTSNNNATD) are compositionally biased toward low complexity. Residues 58-70 (PPEDDIDWGDMEN) show a composition bias toward acidic residues. The segment covering 109–118 (TSQAPETSTG) has biased composition (polar residues). The span at 119–130 (AEEHQETTEESK) shows a compositional bias: basic and acidic residues. The residue at position 139 (Ser-139) is a Phosphoserine. A compositionally biased stretch (low complexity) spans 182–196 (SSNNKNHNQSKNPQN).

This sequence belongs to the SAP domain-containing ribonucleoprotein family.

In Schizosaccharomyces pombe (strain 972 / ATCC 24843) (Fission yeast), this protein is Protein mlo1 (mlo1).